Reading from the N-terminus, the 522-residue chain is Cytochrome P450 1A3 (522 aa).

F229 is a substrate binding site. Heme is bound at residue C463.

It belongs to the cytochrome P450 family. It depends on heme as a cofactor. In terms of tissue distribution, liver.

It localises to the endoplasmic reticulum membrane. The protein localises to the microsome membrane. It carries out the reaction an organic molecule + reduced [NADPH--hemoprotein reductase] + O2 = an alcohol + oxidized [NADPH--hemoprotein reductase] + H2O + H(+). Functionally, cytochromes P450 are a group of heme-thiolate monooxygenases. They oxidize a variety of structurally unrelated compounds, including steroids, fatty acids, and xenobiotics. The polypeptide is Cytochrome P450 1A3 (cyp1a3) (Oncorhynchus mykiss (Rainbow trout)).